We begin with the raw amino-acid sequence, 305 residues long: tRNA dimethylallyltransferase (305 aa).

Position 8–15 (8–15 (GPTGTGKS)) interacts with ATP. 10–15 (TGTGKS) contacts substrate.

This sequence belongs to the IPP transferase family. Monomer. Requires Mg(2+) as cofactor.

The enzyme catalyses adenosine(37) in tRNA + dimethylallyl diphosphate = N(6)-dimethylallyladenosine(37) in tRNA + diphosphate. Functionally, catalyzes the transfer of a dimethylallyl group onto the adenine at position 37 in tRNAs that read codons beginning with uridine, leading to the formation of N6-(dimethylallyl)adenosine (i(6)A). The protein is tRNA dimethylallyltransferase of Mycobacterium sp. (strain KMS).